We begin with the raw amino-acid sequence, 328 residues long: Gonadotropin-releasing hormone receptor (328 aa).

The Extracellular segment spans residues 1 to 38 (MANSASPEQNQNHCSAINSSILLTQGNLPTLTLSGKIR). Asn-18 is a glycosylation site (N-linked (GlcNAc...) asparagine). Residues 39-58 (VTVTFFLFLLSTAFNASFLL) traverse the membrane as a helical segment. The Cytoplasmic segment spans residues 59 to 77 (KLQKWTQRKEKGKKLSRMK). A helical membrane pass occupies residues 78-97 (VLLKHLTLANLLETLIVMPL). The Extracellular portion of the chain corresponds to 98–115 (DGMWNITVQWYAGEFLCK). Asn-102 carries N-linked (GlcNAc...) asparagine glycosylation. Cysteines 114 and 196 form a disulfide. The chain crosses the membrane as a helical span at residues 116 to 137 (VLSYLKLFSMYAPAFMMVVISL). The Cytoplasmic segment spans residues 138 to 164 (DRSLAITRPLAVKSNSRLGRFMIGLAW). Residues 165-184 (LLSSIFAGPQLYIFRMIHLA) traverse the membrane as a helical segment. Topologically, residues 185-212 (DSSGQTEGFSQCVTHGSFPQWWHQAFYN) are extracellular. Residues 213–232 (FFTFSCLFIIPLLIMLICNA) form a helical membrane-spanning segment. At 233–281 (KIMFTLTRVLQQDPHNLQLNQSKNNIPRARLRTLKMTVAFAASFIVCWT) the chain is on the cytoplasmic side. A helical membrane pass occupies residues 282 to 300 (PYYVLGIWYWFDPEMVNRV). Over 301–306 (SDPVNH) the chain is Extracellular. Residues 307-326 (FFFLFAFLNPCFDPLIYGYF) traverse the membrane as a helical segment. The Cytoplasmic portion of the chain corresponds to 327–328 (SL).

Belongs to the G-protein coupled receptor 1 family. As to expression, pituitary gland.

The protein resides in the cell membrane. Its function is as follows. Receptor for gonadotropin releasing hormone (GnRH) that mediates the action of GnRH to stimulate the secretion of the gonadotropic hormones luteinizing hormone (LH) and follicle-stimulating hormone (FSH). This receptor mediates its action by association with G-proteins that activate a phosphatidylinositol-calcium second messenger system. The polypeptide is Gonadotropin-releasing hormone receptor (GNRHR) (Sus scrofa (Pig)).